The sequence spans 374 residues: MDSKWFFIVLISFLLVLPSIVTPYRKSVEITNEEPQRDIYQLEKTNKMAEVGDLGVASFLNILDTSSSSSSSSSSSSSSSSSSSSSSSSSSSSSSSSSSSSSSSSSSSSSSSSSSSSSSSSSSSSSSSSSSSSSSSSSSSSSSSSSSSSSSSSSSSSSSSSSSSSSSSSSSSSSSSSSSSSSSSSSSSSSSSSSSSSSSSSSSSSSSSSSSSSSSSSSSSSSSSSSSSSSSSSSSSSSSSSSSSSSSSSSSSSSSSSSSSSSSSSSSSSSSSSSSSSSSSSSSSSSSSSSSSSSSSSSSSSSSSSSSSSSSSSSSSSSSSSSSSSSSSSSSSSSSSSSSSSSSSSSSSSSSSSSSSSSSSSSSSSSSSSSSGEN.

The first 23 residues, 1 to 23 (MDSKWFFIVLISFLLVLPSIVTP), serve as a signal peptide directing secretion. Residues 66–374 (SSSSSSSSSS…SSSSSSSGEN (309 aa)) are disordered.

It localises to the secreted. This is an uncharacterized protein from Dictyostelium discoideum (Social amoeba).